The primary structure comprises 514 residues: ATP synthase subunit alpha (514 aa).

170–177 provides a ligand contact to ATP; sequence GDRQIGKT.

It belongs to the ATPase alpha/beta chains family. F-type ATPases have 2 components, CF(1) - the catalytic core - and CF(0) - the membrane proton channel. CF(1) has five subunits: alpha(3), beta(3), gamma(1), delta(1), epsilon(1). CF(0) has three main subunits: a(1), b(2) and c(9-12). The alpha and beta chains form an alternating ring which encloses part of the gamma chain. CF(1) is attached to CF(0) by a central stalk formed by the gamma and epsilon chains, while a peripheral stalk is formed by the delta and b chains.

It is found in the cell inner membrane. It catalyses the reaction ATP + H2O + 4 H(+)(in) = ADP + phosphate + 5 H(+)(out). In terms of biological role, produces ATP from ADP in the presence of a proton gradient across the membrane. The alpha chain is a regulatory subunit. The protein is ATP synthase subunit alpha of Pseudomonas entomophila (strain L48).